The primary structure comprises 197 residues: RIP-like protein (197 aa).

Residues 1-20 (MNSTQSPVYRTSVEQKRHAQ) are disordered. The RIP-type zinc finger occupies 122 to 191 (CPVCQIKNLR…GQLYDMCGSC (70 aa)).

This chain is RIP-like protein (Ripalpha), found in Drosophila melanogaster (Fruit fly).